Consider the following 577-residue polypeptide: Zinc finger protein 384 (577 aa).

The segment at 171–225 (TLTEEGGGGGGGGGSVAPKPPRGRKKKRMLESGLPEMNDPYVLSPEDDDDHQKDG) is disordered. A compositionally biased stretch (gly residues) spans 175-185 (EGGGGGGGGGS). Position 214 is a phosphoserine (S214). 8 C2H2-type zinc fingers span residues 228–250 (YRCRMCSLTFYSKSEMQIHSKSH), 256–278 (HKCPHCSKTFANSSYLAQHIRIH), 284–306 (YSCNFCEKSFRQLSHLQQHTRIH), 317–339 (HKCPHCSKTFANTSYLAQHLRIH), 345–367 (YNCSYCQKAFRQLSHLQQHTRIH), 373–397 (YKCAHPGCEKAFTQLSNLQSHRRQH), 403–425 (FKCHNCHRAYTDAASLEVHLSTH), and 433–455 (YTCTICSRAYTSETYLMKHMRKH). The span at 501–515 (QQQQQQQQQQQQQQQ) shows a compositional bias: low complexity. A disordered region spans residues 501–550 (QQQQQQQQQQQQQQQQPPPHFQSPGAAPQGGGGGDSNPNPPPQCSFDLTP).

The protein belongs to the krueppel C2H2-type zinc-finger protein family. Interacts with BCAR1.

The protein localises to the nucleus. Functionally, transcription factor that binds the consensus DNA sequence [GC]AAAAA. Seems to bind and regulate the promoters of MMP1, MMP3, MMP7 and COL1A1. The sequence is that of Zinc finger protein 384 (ZNF384) from Homo sapiens (Human).